The primary structure comprises 210 residues: uncharacterized protein (210 aa).

This is an uncharacterized protein from Aquifex aeolicus (strain VF5).